A 614-amino-acid polypeptide reads, in one-letter code: UvrABC system protein C (614 aa).

One can recognise a GIY-YIG domain in the interval 20–98 (TAPGVYRMYA…IKSLSPRYNV (79 aa)). The UVR domain occupies 207–242 (DELTRELGEQMQAASEALEFEQAARLRDLISSLRSM).

This sequence belongs to the UvrC family. In terms of assembly, interacts with UvrB in an incision complex.

The protein localises to the cytoplasm. The UvrABC repair system catalyzes the recognition and processing of DNA lesions. UvrC both incises the 5' and 3' sides of the lesion. The N-terminal half is responsible for the 3' incision and the C-terminal half is responsible for the 5' incision. The sequence is that of UvrABC system protein C from Stenotrophomonas maltophilia (strain K279a).